The chain runs to 219 residues: Small ribosomal subunit protein uS3c (219 aa).

Residues 39 to 111 form the KH type-2 domain; that stretch reads IRKFLMEKIK…NSFFNVKINF (73 aa).

The protein belongs to the universal ribosomal protein uS3 family. In terms of assembly, part of the 30S ribosomal subunit.

Its subcellular location is the plastid. This is Small ribosomal subunit protein uS3c (rps3) from Euglena longa (Euglenophycean alga).